The primary structure comprises 214 residues: Pyridoxine/pyridoxamine 5'-phosphate oxidase (214 aa).

Substrate contacts are provided by residues 9 to 12 and K67; that span reads RKDY. Residues 62–67, 77–78, R83, K84, and Q106 each bind FMN; these read RMVLLK and FT. 3 residues coordinate substrate: Y124, R128, and S132. Residues 141–142 and W186 contribute to the FMN site; that span reads QS. 192–194 is a binding site for substrate; it reads RLH. An FMN-binding site is contributed by R196.

Belongs to the pyridoxamine 5'-phosphate oxidase family. In terms of assembly, homodimer. FMN is required as a cofactor.

It carries out the reaction pyridoxamine 5'-phosphate + O2 + H2O = pyridoxal 5'-phosphate + H2O2 + NH4(+). The enzyme catalyses pyridoxine 5'-phosphate + O2 = pyridoxal 5'-phosphate + H2O2. It functions in the pathway cofactor metabolism; pyridoxal 5'-phosphate salvage; pyridoxal 5'-phosphate from pyridoxamine 5'-phosphate: step 1/1. The protein operates within cofactor metabolism; pyridoxal 5'-phosphate salvage; pyridoxal 5'-phosphate from pyridoxine 5'-phosphate: step 1/1. Catalyzes the oxidation of either pyridoxine 5'-phosphate (PNP) or pyridoxamine 5'-phosphate (PMP) into pyridoxal 5'-phosphate (PLP). The chain is Pyridoxine/pyridoxamine 5'-phosphate oxidase from Nostoc punctiforme (strain ATCC 29133 / PCC 73102).